The chain runs to 581 residues: Terpene synthase 2, chloroplastic (581 aa).

A chloroplast-targeting transit peptide spans 1–34 (MYSLPGATMSAAPASIISSSSFVEPLLLAAASPA). 4 residues coordinate substrate: arginine 299, aspartate 336, aspartate 340, and arginine 480. Mg(2+) is bound by residues aspartate 336 and aspartate 340. Residues 336 to 340 (DDIFD) carry the DDXXD motif motif. Residues aspartate 483, serine 487, and glutamate 491 each contribute to the Mg(2+) site.

Belongs to the terpene synthase family. In terms of assembly, monomer. The cofactor is Mg(2+).

Its subcellular location is the plastid. The protein resides in the chloroplast. It carries out the reaction (2E,6E)-farnesyl diphosphate + H2O = (3S,6E)-nerolidol + diphosphate. The enzyme catalyses (2E,6E,10E)-geranylgeranyl diphosphate + H2O = (6E,10E)-geranyllinalool + diphosphate. It catalyses the reaction (2E)-geranyl diphosphate + H2O = (S)-linalool + diphosphate. It participates in secondary metabolite biosynthesis; terpenoid biosynthesis. Functionally, involved in sesquiterpene (C15), diterpene (C20) and monoterpene (C10) biosynthesis. Has sesquiterpene synthase activity, converting farnesyl diphosphate to nerolidol, the precursor of the volatile C11-homoterpene (E)-3,8-dimethyl-1,4,7-nonatriene (DMNT). Has diterpene synthase activity, converting geranylgeranyl diphosphate to (E,E)-geranyllinalool, the precursor of the volatile C16-homoterpene (E,E)-4,8,12-trimethyltrideca 1,3,7,11-tetraene (TMTT). Has monoterpene synthase activity, converting geranyl diphosphate into linalool. Forms only the S-isomers of the three tertiary terpene alcohols. The sequence is that of Terpene synthase 2, chloroplastic from Zea mays (Maize).